The chain runs to 435 residues: MGTQKKGPRSEKVSPYDTTTPEVEALDHQMDTLNWRIWIIQVMMFTLGAVMLLATLIAASSEYTGIPCFYAAVVDYELFNATLDGGVWSGNRGGYSAPVLFLEPHSVVAFTYYTALTAMAMAVYTLITAAIIHRETKNQRVRQSSGVAWLVVDPTTLFWGLLSLWLLNAVVLLLAYKQIGVAATLYLGHFATSVIFTTYFCGRGKLDETNIKAVANLRQQSVFLYRLAGPTRAVFVNLMAALMAICILFVSLMLELVVANHLHTGLWSSVSVAMSTFSTLSVVYLIVSELILAHYIHVLIGPSLGTLVACATLGTAAHSYMDRLYDPISVQSPRLIPTTRGTLACLAVFSVVMLLLRLMRAYVYHRQKRSRFYGAVRRVPERVRGYIRKVKPAHRNSRRTNYPSQGYGYVYENDSTYETDREDELLYERSNSGWE.

At 1–36 (MGTQKKGPRSEKVSPYDTTTPEVEALDHQMDTLNWR) the chain is on the intravirion side. The chain crosses the membrane as a helical span at residues 37-57 (IWIIQVMMFTLGAVMLLATLI). Topologically, residues 58–111 (AASSEYTGIPCFYAAVVDYELFNATLDGGVWSGNRGGYSAPVLFLEPHSVVAFT) are virion surface. A helical membrane pass occupies residues 112–132 (YYTALTAMAMAVYTLITAAII). Topologically, residues 133–155 (HRETKNQRVRQSSGVAWLVVDPT) are intravirion. Residues 156–176 (TLFWGLLSLWLLNAVVLLLAY) traverse the membrane as a helical segment. Topologically, residues 177-178 (KQ) are virion surface. Residues 179–199 (IGVAATLYLGHFATSVIFTTY) traverse the membrane as a helical segment. Residues 200 to 233 (FCGRGKLDETNIKAVANLRQQSVFLYRLAGPTRA) lie on the Intravirion side of the membrane. Residues 234–254 (VFVNLMAALMAICILFVSLML) traverse the membrane as a helical segment. Residues 255–265 (ELVVANHLHTG) are Virion surface-facing. Residues 266-288 (LWSSVSVAMSTFSTLSVVYLIVS) traverse the membrane as a helical segment. At 289–294 (ELILAH) the chain is on the intravirion side. Residues 295-317 (YIHVLIGPSLGTLVACATLGTAA) traverse the membrane as a helical segment. The Virion surface portion of the chain corresponds to 318-334 (HSYMDRLYDPISVQSPR). A helical transmembrane segment spans residues 335–355 (LIPTTRGTLACLAVFSVVMLL). Topologically, residues 356–435 (LRLMRAYVYH…LYERSNSGWE (80 aa)) are intravirion.

It belongs to the herpesviridae glycoprotein M family. Interacts (via N-terminus) with gN (via N-terminus). The gM-gN heterodimer forms the gCII complex.

The protein localises to the virion membrane. It is found in the host Golgi apparatus. It localises to the host trans-Golgi network. The protein resides in the host endosome membrane. Its subcellular location is the host nucleus inner membrane. Envelope glycoprotein important for virion assembly and egress. Plays a role in the correct incorporation of gH-gL into virion membrane. Directs the glycoprotein N (gN) to the host trans-Golgi network. The protein is Envelope glycoprotein M of Homo sapiens (Human).